The primary structure comprises 504 residues: Maturase K (504 aa).

The protein belongs to the intron maturase 2 family. MatK subfamily.

It is found in the plastid. It localises to the chloroplast. Its function is as follows. Usually encoded in the trnK tRNA gene intron. Probably assists in splicing its own and other chloroplast group II introns. The polypeptide is Maturase K (Arabidopsis thaliana (Mouse-ear cress)).